The primary structure comprises 462 residues: Iroquois-class homeodomain protein irx-1-B (462 aa).

The segment at residues 121–183 is a DNA-binding region (homeobox; TALE-type); the sequence is DPGRPKNATR…NARRRLKKEN (63 aa). Disordered stretches follow at residues 191–302, 314–339, and 405–462; these read GKED…PHSK, SPDG…QHPA, and SLSS…LPSA. Composition is skewed to acidic residues over residues 210-220 and 228-239; these read EDDEEIDLESI and NDGEQSNEEEDE. The span at 240–257 shows a compositional bias: basic and acidic residues; it reads KLDHFRHGEKVSLKKESE. Basic and acidic residues predominate over residues 410 to 426; the sequence is RTPERTSPKHSDRENLP. The segment covering 446 to 455 has biased composition (polar residues); sequence FSQQEGTSRI.

Belongs to the TALE/IRO homeobox family.

The protein resides in the nucleus. In terms of biological role, acts partially redundantly with other irx members in neural patterning. Required for formation of the posterior forebrain, midbrain, hindbrain, and to a lesser extent, spinal cord. Acts early in neural plate development to induce expression of some but not all proneural genes, and specify a neural precursor state. Also up-regulates repressors that prevent neuronal differentiation. Patterns the neuroectoderm in both the anterior/posterior and dorsal/ventral axes. Acts primarily as a transcriptional repressor during neural development, and binds to the bmp4 promoter to repress gene expression and thus mediate down-regulation of bmp4 by wnt signaling. Controls multiple processes through bmp4-repression including neural plate development, neural crest specification and Spemann organizer development. Involved in the specification of the preplacodal field at the anterior border of the neural plate. Regulates the genetic cascade of interactions that are necessary for positioning the isthmus organizer and the formation of the midbrain-hindbrain boundary. Required during at least two stages of pronephros kidney development; during neurula stages, maintains transcription of key renal genes to define the size and identity of the pronephric anlage, probably in part through regulation of bmp-signaling. Subsequently required for proper formation of the intermediate tubule segment of the pronephros. Acts principally as a transcriptional activator during pronephros development. The protein is Iroquois-class homeodomain protein irx-1-B (irx1-b) of Xenopus laevis (African clawed frog).